The primary structure comprises 891 residues: Valine--tRNA ligase (891 aa).

The 'HIGH' region signature appears at 43–53; it reads PFTSGTLHLGH. The 'KMSKS' region signature appears at 536 to 540; it reads KMSKS. Residue lysine 539 participates in ATP binding.

The protein belongs to the class-I aminoacyl-tRNA synthetase family. ValS type 2 subfamily.

The protein localises to the cytoplasm. The catalysed reaction is tRNA(Val) + L-valine + ATP = L-valyl-tRNA(Val) + AMP + diphosphate. Catalyzes the attachment of valine to tRNA(Val). As ValRS can inadvertently accommodate and process structurally similar amino acids such as threonine, to avoid such errors, it has a 'posttransfer' editing activity that hydrolyzes mischarged Thr-tRNA(Val) in a tRNA-dependent manner. In Pyrococcus abyssi (strain GE5 / Orsay), this protein is Valine--tRNA ligase.